Consider the following 250-residue polypeptide: DNA repair protein RecO (250 aa).

Belongs to the RecO family.

In terms of biological role, involved in DNA repair and RecF pathway recombination. This is DNA repair protein RecO from Staphylococcus aureus (strain bovine RF122 / ET3-1).